The following is a 359-amino-acid chain: Membrane-bound lytic murein transglycosylase C (359 aa).

Positions 1–16 are cleaved as a signal peptide; sequence MKKYLALALIAPLLIS. Residue C17 is the site of N-palmitoyl cysteine attachment. A lipid anchor (S-diacylglycerol cysteine) is attached at C17.

This sequence belongs to the transglycosylase Slt family.

Its subcellular location is the cell outer membrane. The enzyme catalyses Exolytic cleavage of the (1-&gt;4)-beta-glycosidic linkage between N-acetylmuramic acid (MurNAc) and N-acetylglucosamine (GlcNAc) residues in peptidoglycan, from either the reducing or the non-reducing ends of the peptidoglycan chains, with concomitant formation of a 1,6-anhydrobond in the MurNAc residue.. Its function is as follows. Murein-degrading enzyme. May play a role in recycling of muropeptides during cell elongation and/or cell division. In Escherichia coli O127:H6 (strain E2348/69 / EPEC), this protein is Membrane-bound lytic murein transglycosylase C.